A 430-amino-acid polypeptide reads, in one-letter code: Phosphoserine aminotransferase 1, chloroplastic (430 aa).

A chloroplast-targeting transit peptide spans 1–51; the sequence is MAATTNSFLVGSNNTQIPALKPKSSSQSFLHLSKPNTVNFVSKTKPVAVRC. N-acetylvaline is present on valine 52. Arginine 111 contributes to the L-glutamate binding site. Pyridoxal 5'-phosphate is bound by residues 145–146, tryptophan 171, threonine 221, aspartate 241, and glutamine 264; that span reads AT. Lysine 265 carries the N6-(pyridoxal phosphate)lysine modification. 306-307 contacts pyridoxal 5'-phosphate; the sequence is NT.

The protein belongs to the class-V pyridoxal-phosphate-dependent aminotransferase family. SerC subfamily. In terms of assembly, homodimer. Pyridoxal 5'-phosphate serves as cofactor. As to expression, ubiquitous, but expressed preferentially in light-grown roots and shoots. Detected in root meristems and in root tissues surrounding the vascular bundle.

Its subcellular location is the plastid. The protein localises to the chloroplast. It carries out the reaction O-phospho-L-serine + 2-oxoglutarate = 3-phosphooxypyruvate + L-glutamate. The catalysed reaction is 4-(phosphooxy)-L-threonine + 2-oxoglutarate = (R)-3-hydroxy-2-oxo-4-phosphooxybutanoate + L-glutamate. The protein operates within amino-acid biosynthesis; L-serine biosynthesis; L-serine from 3-phospho-D-glycerate: step 2/3. It participates in cofactor biosynthesis; pyridoxine 5'-phosphate biosynthesis; pyridoxine 5'-phosphate from D-erythrose 4-phosphate: step 3/5. Inhibited by high concentration of cysteine and by 3-phosphonooxypyruvate. Not inhibited by serine, threonine, valine, glycine, tryptophan and O-acetyl-L-serine. Functionally, involved in the plastidial phosphorylated pathway of serine biosynthesis (PPSB). Catalyzes the reversible conversion of 3-phosphohydroxypyruvate to phosphoserine. The polypeptide is Phosphoserine aminotransferase 1, chloroplastic (Arabidopsis thaliana (Mouse-ear cress)).